Here is a 347-residue protein sequence, read N- to C-terminus: Very-long-chain 3-oxoacyl-CoA reductase (347 aa).

A helical transmembrane segment spans residues 22 to 42 (LLWSIFGFGVLKATTLILRIM). NADP(+) is bound by residues valine 68, aspartate 122, asparagine 149, tyrosine 223, lysine 227, valine 256, and serine 258. The Proton donor role is filled by tyrosine 223. The active-site Lowers pKa of active site Tyr is the lysine 227.

This sequence belongs to the short-chain dehydrogenases/reductases (SDR) family.

The protein resides in the endoplasmic reticulum membrane. It carries out the reaction a very-long-chain (3R)-3-hydroxyacyl-CoA + NADP(+) = a very-long-chain 3-oxoacyl-CoA + NADPH + H(+). Its pathway is lipid metabolism; fatty acid biosynthesis. In terms of biological role, component of the microsomal membrane bound fatty acid elongation system, which produces the 26-carbon very long-chain fatty acids (VLCFA) from palmitate. Catalyzes the reduction of the 3-ketoacyl-CoA intermediate that is formed in each cycle of fatty acid elongation. VLCFAs serve as precursors for ceramide and sphingolipids. The polypeptide is Very-long-chain 3-oxoacyl-CoA reductase (Vanderwaltozyma polyspora (strain ATCC 22028 / DSM 70294 / BCRC 21397 / CBS 2163 / NBRC 10782 / NRRL Y-8283 / UCD 57-17) (Kluyveromyces polysporus)).